A 659-amino-acid polypeptide reads, in one-letter code: Cysteine-rich receptor-like protein kinase 5 (659 aa).

A signal peptide spans 1-24; it reads MSAYTSLNFLFLLTFFIGSLRVSA. The Extracellular segment spans residues 25–279; it reads QLQDPTYVGH…FPPGKGKNST (255 aa). 2 Gnk2-homologous domains span residues 28–132 and 138–243; these read DPTY…DRNI and TTTT…VYPF. 2 N-linked (GlcNAc...) asparagine glycosylation sites follow: N175 and N277. A helical membrane pass occupies residues 280 to 300; it reads VIIIAIVVPVAISVLICVAVF. The Cytoplasmic portion of the chain corresponds to 301–659; that stretch reads SFHASKRAKK…AASITILAPR (359 aa). The Protein kinase domain occupies 340–619; sequence FSMCNKLGQG…QMLTTSSIAL (280 aa). ATP-binding positions include 346-354 and K368; that span reads LGQGGFGQV. Phosphotyrosine is present on Y413. D465 functions as the Proton acceptor in the catalytic mechanism. At T505 the chain carries Phosphothreonine. Y513 bears the Phosphotyrosine mark.

It belongs to the protein kinase superfamily. Ser/Thr protein kinase family. CRK subfamily. Interacts with CRKIP1 (KAPP), CRKIP2 and CRKIP3, three kinase-associated type 2C proteins.

Its subcellular location is the membrane. The catalysed reaction is L-seryl-[protein] + ATP = O-phospho-L-seryl-[protein] + ADP + H(+). It carries out the reaction L-threonyl-[protein] + ATP = O-phospho-L-threonyl-[protein] + ADP + H(+). In terms of biological role, involved in multiple distinct defense responses. May function as a disease resistance (R) protein. This chain is Cysteine-rich receptor-like protein kinase 5 (CRK5), found in Arabidopsis thaliana (Mouse-ear cress).